Consider the following 477-residue polypeptide: Ankyrin repeat, SAM and basic leucine zipper domain-containing protein 1 (477 aa).

Positions 1 to 24 are disordered; that stretch reads MATSALRGLAVAGGGESSESEDDG. Phosphoserine occurs at positions 17, 18, and 20. ANK repeat units lie at residues 46-76, 80-109, 112-146, 150-179, 183-212, and 216-245; these read EKKEKFKKALTTGDVSLVQELLDSGIISVDA, YGWTPLMYAASVANAELVRVLLDRGANASF, DKQTILITACSAHGSEEQILKCVELLLSRNADPNV, RLMTPIMYAARDGHTQVVALLVASGAEVNT, NGYTALTWAARQGHKSIVLKLLELGANKML, and DGKLPSEIAKRNKHHEIFNLLSFTLNPLEG. Positions 274 to 336 constitute an SAM domain; sequence SYAEFGDLEV…KILAALKELE (63 aa).

In terms of assembly, interacts with DDX4, PIWIL1, RANBP9 and TDRD1.

The protein resides in the cytoplasm. In terms of biological role, plays a central role during spermatogenesis by repressing transposable elements and preventing their mobilization, which is essential for the germline integrity. Acts via the piRNA metabolic process, which mediates the repression of transposable elements during meiosis by forming complexes composed of piRNAs and Piwi proteins and governs the methylation and subsequent repression of transposons. Its association with pi-bodies suggests a participation in the primary piRNAs metabolic process. Required prior to the pachytene stage to facilitate the production of multiple types of piRNAs, including those associated with repeats involved in the regulation of retrotransposons. May act by mediating protein-protein interactions during germ cell maturation. This is Ankyrin repeat, SAM and basic leucine zipper domain-containing protein 1 (ASZ1) from Saimiri boliviensis boliviensis (Bolivian squirrel monkey).